The chain runs to 282 residues: MTHWPSPAKLNLFLYITGQRADGYHTLQTLFQFLDYGDTLHIEPRRDGEIHLLTPVNGVENEDNLIVRAARLLMKIASESGRLPAGSGADISIEKRLPMGGGLGGGSSNAATVLVALNHLWQCGLSIDELATLGLTLGADVPVFVRGHAAFAEGVGEILTPVNPPEKWYLVAHPGVSIPTPVIFKDPQLPRNTPKRSIDTLLKCEFSNDCEVIARKRFREVDAALSWLLEYAPSRLTGTGACVFAEFDTESCARQVLEQAPEWLNAFVAKGVNLSPLHRELL.

Lysine 9 is an active-site residue. 98 to 108 is an ATP binding site; it reads PMGGGLGGGSS. Aspartate 140 is a catalytic residue.

The protein belongs to the GHMP kinase family. IspE subfamily. In terms of assembly, homodimer.

It catalyses the reaction 4-CDP-2-C-methyl-D-erythritol + ATP = 4-CDP-2-C-methyl-D-erythritol 2-phosphate + ADP + H(+). It functions in the pathway isoprenoid biosynthesis; isopentenyl diphosphate biosynthesis via DXP pathway; isopentenyl diphosphate from 1-deoxy-D-xylulose 5-phosphate: step 3/6. In terms of biological role, catalyzes the phosphorylation of the position 2 hydroxy group of 4-diphosphocytidyl-2C-methyl-D-erythritol. This Salmonella heidelberg (strain SL476) protein is 4-diphosphocytidyl-2-C-methyl-D-erythritol kinase.